The following is a 393-amino-acid chain: Thermostable carboxypeptidase 1 (393 aa).

Residues His-104, Asp-109, and His-245 each coordinate Zn(2+). Tyr-302 (proton donor) is an active-site residue. Glu-373 serves as the catalytic Nucleophile.

The protein belongs to the peptidase M20 family. Homotetramer. Zn(2+) is required as a cofactor.

Its function is as follows. Can release basic, acidic, aromatic, and, to a lesser extent, aliphatic amino acids. The polypeptide is Thermostable carboxypeptidase 1 (cpsA1) (Saccharolobus solfataricus (strain ATCC 35092 / DSM 1617 / JCM 11322 / P2) (Sulfolobus solfataricus)).